Consider the following 562-residue polypeptide: Formate--tetrahydrofolate ligase (562 aa).

71–78 (TPAGEGKS) contacts ATP.

The protein belongs to the formate--tetrahydrofolate ligase family.

The catalysed reaction is (6S)-5,6,7,8-tetrahydrofolate + formate + ATP = (6R)-10-formyltetrahydrofolate + ADP + phosphate. The protein operates within one-carbon metabolism; tetrahydrofolate interconversion. The protein is Formate--tetrahydrofolate ligase of Bacillus thuringiensis (strain Al Hakam).